A 335-amino-acid chain; its full sequence is tRNA pseudouridine synthase D (335 aa).

Catalysis depends on D77, which acts as the Nucleophile. One can recognise a TRUD domain in the interval 152–308; it reads GFPNYFTEQR…AQNLNWQFEP (157 aa).

The protein belongs to the pseudouridine synthase TruD family.

The catalysed reaction is uridine(13) in tRNA = pseudouridine(13) in tRNA. Functionally, responsible for synthesis of pseudouridine from uracil-13 in transfer RNAs. The chain is tRNA pseudouridine synthase D from Actinobacillus succinogenes (strain ATCC 55618 / DSM 22257 / CCUG 43843 / 130Z).